We begin with the raw amino-acid sequence, 373 residues long: Lipoyl synthase (373 aa).

The segment at 12–36 (HVVSNDHPSSSPLQPGVKQSGEDKI) is disordered. 7 residues coordinate [4Fe-4S] cluster: Cys-81, Cys-86, Cys-92, Cys-107, Cys-111, Cys-114, and Ser-323. One can recognise a Radical SAM core domain in the interval 93–312 (FSHGTATFMI…EEYGMALGFS (220 aa)). Residues 346-373 (PAVSSTEHRERHTIASKSASKTESIPHR) are disordered. Residues 360–373 (ASKSASKTESIPHR) are compositionally biased toward polar residues.

Belongs to the radical SAM superfamily. Lipoyl synthase family. It depends on [4Fe-4S] cluster as a cofactor.

Its subcellular location is the cytoplasm. It catalyses the reaction [[Fe-S] cluster scaffold protein carrying a second [4Fe-4S](2+) cluster] + N(6)-octanoyl-L-lysyl-[protein] + 2 oxidized [2Fe-2S]-[ferredoxin] + 2 S-adenosyl-L-methionine + 4 H(+) = [[Fe-S] cluster scaffold protein] + N(6)-[(R)-dihydrolipoyl]-L-lysyl-[protein] + 4 Fe(3+) + 2 hydrogen sulfide + 2 5'-deoxyadenosine + 2 L-methionine + 2 reduced [2Fe-2S]-[ferredoxin]. Its pathway is protein modification; protein lipoylation via endogenous pathway; protein N(6)-(lipoyl)lysine from octanoyl-[acyl-carrier-protein]: step 2/2. Functionally, catalyzes the radical-mediated insertion of two sulfur atoms into the C-6 and C-8 positions of the octanoyl moiety bound to the lipoyl domains of lipoate-dependent enzymes, thereby converting the octanoylated domains into lipoylated derivatives. The sequence is that of Lipoyl synthase from Xylella fastidiosa (strain M12).